A 57-amino-acid polypeptide reads, in one-letter code: uncharacterized protein (57 aa).

A helical membrane pass occupies residues 34 to 51 (TALLDAAAVVVVPGLLAA).

Its subcellular location is the membrane. This is an uncharacterized protein from Dictyostelium discoideum (Social amoeba).